Reading from the N-terminus, the 291-residue chain is ATP synthase subunit a (291 aa).

The next 6 membrane-spanning stretches (helical) occupy residues 51–71, 117–137, 146–166, 173–193, 213–233, and 239–259; these read FSFTNPSLFMLLTLSLVLLLV, FFPCIFVTFTFLLFCNLQGMI, HFLITLGLSFSIFIGITIVGF, FLSFLLPAGVPLPLAPFLVLL, MMAGHSLVKILSGFAWTMLCM, and FIGDLGPLFIVLALTGPELGV.

The protein belongs to the ATPase A chain family. F-type ATPases have 2 components, CF(1) - the catalytic core - and CF(0) - the membrane proton channel. CF(1) has five subunits: alpha(3), beta(3), gamma(1), delta(1), epsilon(1). CF(0) has three main subunits: a, b and c.

The protein resides in the mitochondrion inner membrane. Its function is as follows. Mitochondrial membrane ATP synthase (F(1)F(0) ATP synthase or Complex V) produces ATP from ADP in the presence of a proton gradient across the membrane which is generated by electron transport complexes of the respiratory chain. F-type ATPases consist of two structural domains, F(1) - containing the extramembraneous catalytic core and F(0) - containing the membrane proton channel, linked together by a central stalk and a peripheral stalk. During catalysis, ATP synthesis in the catalytic domain of F(1) is coupled via a rotary mechanism of the central stalk subunits to proton translocation. Key component of the proton channel; it may play a direct role in the translocation of protons across the membrane. The sequence is that of ATP synthase subunit a (ATP6) from Vicia faba (Broad bean).